The primary structure comprises 69 residues: Conotoxin LvVID (69 aa).

Positions 1–17 (VLIIAVLFLTACQLTTA) are cleaved as a signal peptide. Positions 18 to 40 (ETYPRGQQRHHALRSTDKNSKLT) are excised as a propeptide. 3 disulfide bridges follow: C43/C57, C50/C61, and C56/C68.

This sequence belongs to the conotoxin O1 superfamily. In terms of tissue distribution, expressed by the venom duct.

The protein localises to the secreted. The protein is Conotoxin LvVID of Conus lividus (Livid cone).